A 349-amino-acid chain; its full sequence is Quinone oxidoreductase-like protein 1 (349 aa).

The protein belongs to the zinc-containing alcohol dehydrogenase family. Quinone oxidoreductase subfamily. In terms of assembly, homodimer. Component of the FERRY complex composed of five subunits, TBCK, PPP1R21, FERRY3, CRYZL1 and GATD1 with a ratio of 1:2:1:2:4, respectively. As to expression, ubiquitous.

The protein resides in the early endosome. Functionally, component of the FERRY complex (Five-subunit Endosomal Rab5 and RNA/ribosome intermediary). The FERRY complex directly interacts with mRNAs and RAB5A, and functions as a RAB5A effector involved in the localization and the distribution of specific mRNAs most likely by mediating their endosomal transport. The complex recruits mRNAs and ribosomes to early endosomes through direct mRNA-interaction. This Homo sapiens (Human) protein is Quinone oxidoreductase-like protein 1 (CRYZL1).